The primary structure comprises 156 residues: Small ribosomal subunit protein uS7 (156 aa).

This sequence belongs to the universal ribosomal protein uS7 family. In terms of assembly, part of the 30S ribosomal subunit. Contacts proteins S9 and S11.

Functionally, one of the primary rRNA binding proteins, it binds directly to 16S rRNA where it nucleates assembly of the head domain of the 30S subunit. Is located at the subunit interface close to the decoding center, probably blocks exit of the E-site tRNA. The polypeptide is Small ribosomal subunit protein uS7 (Mycobacterium ulcerans (strain Agy99)).